The sequence spans 421 residues: ATP-dependent RNA helicase RhlB (421 aa).

Residues 9–37 (QKFSDFALHPKVVEALEKKGFHNCTPIQA) carry the Q motif motif. In terms of domain architecture, Helicase ATP-binding spans 40 to 219 (LPLTLAGRDV…FEQMNNAEYI (180 aa)). An ATP-binding site is contributed by 53–60 (AQTGTGKT). Positions 165-168 (DEAD) match the DEAD box motif. One can recognise a Helicase C-terminal domain in the interval 245–390 (RLLQTLIEEE…VSKYNPDALM (146 aa)). A disordered region spans residues 392 to 421 (DLPKPLRLTRPRTGNGPRRTGTPRNRRRSG). Residues 402 to 414 (PRTGNGPRRTGTP) are compositionally biased toward low complexity.

The protein belongs to the DEAD box helicase family. RhlB subfamily. Component of the RNA degradosome, which is a multiprotein complex involved in RNA processing and mRNA degradation.

The protein resides in the cytoplasm. The catalysed reaction is ATP + H2O = ADP + phosphate + H(+). DEAD-box RNA helicase involved in RNA degradation. Has RNA-dependent ATPase activity and unwinds double-stranded RNA. This chain is ATP-dependent RNA helicase RhlB, found in Escherichia coli O7:K1 (strain IAI39 / ExPEC).